The following is a 67-amino-acid chain: Small ribosomal subunit protein bS21 (67 aa).

It belongs to the bacterial ribosomal protein bS21 family.

The chain is Small ribosomal subunit protein bS21 from Rhodospirillum centenum (strain ATCC 51521 / SW).